The sequence spans 708 residues: Capsid scaffolding protein (708 aa).

Active-site charge relay system residues include histidine 63, serine 132, and histidine 157. 3 disordered regions span residues 269-339 (ASAE…MSHP), 455-565 (HPSY…QQQR), and 593-619 (ALPS…SGGG). Residues 284–293 (PAAGARVPSS) are compositionally biased toward low complexity. Positions 294–311 (SPSPPVEPPSPVQPPALP) are enriched in pro residues. Over residues 326–339 (SPSEPAEAASMSHP) the composition is skewed to low complexity. Positions 333–352 (AASMSHPLSAAVPAATAPPG) are interaction with pAP. The span at 498 to 513 (KQHRHGGSGGHNKRRK) shows a compositional bias: basic residues. 2 consecutive short sequence motifs (nuclear localization signal) follow at residues 510–515 (KRRKET) and 537–543 (RARKRLK). Over residues 593-611 (ALPSAASSSPTTTTVCTPT) the composition is skewed to low complexity. Residues 688 to 708 (PPKDMVDLNRRIFVAALNKLE) form an interaction with major capsid protein region.

The protein belongs to the herpesviridae capsid scaffolding protein family. In terms of assembly, homomultimer. Interacts with major capsid protein. As to quaternary structure, exists in a monomer-dimer equilibrium with the dimer being the active species. In terms of processing, capsid scaffolding protein is cleaved by assemblin after formation of the spherical procapsid. As a result, the capsid obtains its mature, icosahedral shape. Cleavages occur at two or more sites: release (R-site) and maturation (M-site).

Its subcellular location is the host cytoplasm. It is found in the host nucleus. The enzyme catalyses Cleaves -Ala-|-Ser- and -Ala-|-Ala- bonds in the scaffold protein.. Its function is as follows. Acts as a scaffold protein by binding major capsid protein in the cytoplasm, inducing the nuclear localization of both proteins. Multimerizes in the nucleus such as major capsid protein forms the icosahedral T=16 capsid. Autocatalytic cleavage releases the assembly protein, and subsequently abolishes interaction with major capsid protein. Cleavages products are evicted from the capsid before or during DNA packaging. Protease that plays an essential role in virion assembly within the nucleus. Catalyzes the cleavage of the assembly protein after formation of the spherical procapsid. By that cleavage, the capsid matures and gains its icosahedral shape. The cleavage sites seem to include -Ala-Ser-, -Ala-Ala-, as well as Ala-Thr bonds. Assemblin and cleavages products are evicted from the capsid before or during DNA packaging. Functionally, plays a major role in capsid assembly. Acts as a scaffold protein by binding major capsid protein. Multimerizes in the nucleus such as major capsid protein forms the icosahedral T=16 capsid. Cleaved by assemblin after capsid completion. The cleavages products are evicted from the capsid before or during DNA packaging. This is Capsid scaffolding protein (UL80) from Homo sapiens (Human).